A 671-amino-acid chain; its full sequence is Amidase chry2 (671 aa).

Residue cysteine 2 is the Nucleophile of the active site. Positions cysteine 2–asparagine 220 constitute a Glutamine amidotransferase type-2 domain. The 389-residue stretch at valine 251–asparagine 639 folds into the Asparagine synthetase domain.

Belongs to the asparagine synthetase family.

It functions in the pathway pigment biosynthesis. Functionally, amidase; part of the gene cluster that mediates the biosynthesis of the yellow pigment chrysogine. Pyruvic acid and anthranilic acid are likely substrates for the nonribosomal peptide synthetase chry1/NRPS14, with pyruvic acid adenylated by the first A domain and anthranilic acid by the second. If pyruvic acid and anthranilic acid are merged and released from chry1/NRPS14 by hydrolysis, a subsequent amidation would lead to 2-pyruvoylaminobenzamide. This process is probably catalyzed by the amidotransferase chry2 using glutamine as amino donor. The dehydrogenase chry5 that has a terminal berberine bridge domain for C-N cyclization could catalyze the cyclization of 2-pyruvoylaminobenzamide to yield acetyl-4(3H)-quinazolidinone. A final reduction of acetyl-4(3H)-quinazolidinone catalyzed by the oxidoreductase chry4 would result in chrysogine. The protein is Amidase chry2 of Gibberella zeae (strain ATCC MYA-4620 / CBS 123657 / FGSC 9075 / NRRL 31084 / PH-1) (Wheat head blight fungus).